Reading from the N-terminus, the 368-residue chain is MHPDVIADLNALDTTLRTCESVVDVEELRRRIDELEHQAADPGLWNDQEHAQQVTSQLSHAQAELRRIVALRERLDEMPILYELAEDEGPDAVADADAERASLRDDIAAMEVKTMLSGEYDERDALINIRSGAGGIDAADWAEMLMRMYIRWAEKHDYGVEVYDTSYAEEAGLKSATFAIKGPYTYGTLSVEMGTHRLVRISPFDNQGRRQTSFAEVEVLPVVETTDHIEINENDIRVDVYRSSGPGGQSVNTTDSAVRLTHIPTGIVVTCQNEKSQLQNKVSAMRVLQAKLLAVKRQEERAEMDALKGDSGSSWGNQMRSYVLHPYQMVKDLRTEYEVNNPSAVLDGDIDGFLEAGIRWRMSENQSA.

The residue at position 249 (Gln-249) is an N5-methylglutamine.

This sequence belongs to the prokaryotic/mitochondrial release factor family. In terms of processing, methylated by PrmC. Methylation increases the termination efficiency of RF2.

It is found in the cytoplasm. Peptide chain release factor 2 directs the termination of translation in response to the peptide chain termination codons UGA and UAA. The protein is Peptide chain release factor 2 of Rhodococcus erythropolis (strain PR4 / NBRC 100887).